Here is a 33-residue protein sequence, read N- to C-terminus: uncharacterized protein (33 aa).

Residues Met-1 to Lys-33 form a disordered region.

This is an uncharacterized protein from Mycobacterium tuberculosis (strain CDC 1551 / Oshkosh).